The sequence spans 299 residues: Tyrosine recombinase XerC (299 aa).

One can recognise a Core-binding (CB) domain in the interval 2–88 (SALQPLIDTY…ALRSFLDYLV (87 aa)). The region spanning 109–289 (PLPKNVSVDD…DFQHLSKIYD (181 aa)) is the Tyr recombinase domain. Residues Arg-148, Lys-172, His-241, Arg-244, and His-267 contribute to the active site. Tyr-276 functions as the O-(3'-phospho-DNA)-tyrosine intermediate in the catalytic mechanism.

It belongs to the 'phage' integrase family. XerC subfamily. As to quaternary structure, forms a cyclic heterotetrameric complex composed of two molecules of XerC and two molecules of XerD.

The protein localises to the cytoplasm. In terms of biological role, site-specific tyrosine recombinase, which acts by catalyzing the cutting and rejoining of the recombining DNA molecules. The XerC-XerD complex is essential to convert dimers of the bacterial chromosome into monomers to permit their segregation at cell division. It also contributes to the segregational stability of plasmids. The protein is Tyrosine recombinase XerC of Psychromonas ingrahamii (strain DSM 17664 / CCUG 51855 / 37).